Here is a 100-residue protein sequence, read N- to C-terminus: Urease subunit gamma (100 aa).

It belongs to the urease gamma subunit family. In terms of assembly, heterotrimer of UreA (gamma), UreB (beta) and UreC (alpha) subunits. Three heterotrimers associate to form the active enzyme.

The protein resides in the cytoplasm. The enzyme catalyses urea + 2 H2O + H(+) = hydrogencarbonate + 2 NH4(+). It participates in nitrogen metabolism; urea degradation; CO(2) and NH(3) from urea (urease route): step 1/1. The polypeptide is Urease subunit gamma (Escherichia coli).